Reading from the N-terminus, the 361-residue chain is 3-dehydroquinate synthase (361 aa).

Residues 71–76, 105–109, 129–130, K142, K151, and 169–172 each bind NAD(+); these read DGEQFK, GVIGD, TT, and CLQT. Residues E184, H247, and H264 each contribute to the Zn(2+) site.

It belongs to the sugar phosphate cyclases superfamily. Dehydroquinate synthase family. It depends on Co(2+) as a cofactor. Zn(2+) is required as a cofactor. The cofactor is NAD(+).

The protein localises to the cytoplasm. It catalyses the reaction 7-phospho-2-dehydro-3-deoxy-D-arabino-heptonate = 3-dehydroquinate + phosphate. Its pathway is metabolic intermediate biosynthesis; chorismate biosynthesis; chorismate from D-erythrose 4-phosphate and phosphoenolpyruvate: step 2/7. Functionally, catalyzes the conversion of 3-deoxy-D-arabino-heptulosonate 7-phosphate (DAHP) to dehydroquinate (DHQ). This chain is 3-dehydroquinate synthase, found in Edwardsiella ictaluri (strain 93-146).